The primary structure comprises 394 residues: Argininosuccinate synthase (394 aa).

An ATP-binding site is contributed by 8-16; it reads AYSGGLDTS. L-citrulline-binding residues include Tyr86 and Ser91. Gly116 provides a ligand contact to ATP. L-aspartate contacts are provided by Thr118, Asn122, and Asp123. Residue Asn122 coordinates L-citrulline. The L-citrulline site is built by Arg126, Ser172, Ser181, Glu256, and Tyr268.

The protein belongs to the argininosuccinate synthase family. Type 1 subfamily. In terms of assembly, homotetramer.

The protein localises to the cytoplasm. The enzyme catalyses L-citrulline + L-aspartate + ATP = 2-(N(omega)-L-arginino)succinate + AMP + diphosphate + H(+). The protein operates within amino-acid biosynthesis; L-arginine biosynthesis; L-arginine from L-ornithine and carbamoyl phosphate: step 2/3. The sequence is that of Argininosuccinate synthase from Methanococcoides burtonii (strain DSM 6242 / NBRC 107633 / OCM 468 / ACE-M).